Here is an 83-residue protein sequence, read N- to C-terminus: Cytochrome b559 subunit alpha (83 aa).

The helical transmembrane segment at 21–35 (VIHSITIPSLFIAGW) threads the bilayer. His23 contacts heme.

The protein belongs to the PsbE/PsbF family. In terms of assembly, heterodimer of an alpha subunit and a beta subunit. PSII is composed of 1 copy each of membrane proteins PsbA, PsbB, PsbC, PsbD, PsbE, PsbF, PsbH, PsbI, PsbJ, PsbK, PsbL, PsbM, PsbT, PsbX, PsbY, PsbZ, Psb30/Ycf12, at least 3 peripheral proteins of the oxygen-evolving complex and a large number of cofactors. It forms dimeric complexes. Heme b serves as cofactor.

The protein localises to the plastid. It localises to the chloroplast thylakoid membrane. This b-type cytochrome is tightly associated with the reaction center of photosystem II (PSII). PSII is a light-driven water:plastoquinone oxidoreductase that uses light energy to abstract electrons from H(2)O, generating O(2) and a proton gradient subsequently used for ATP formation. It consists of a core antenna complex that captures photons, and an electron transfer chain that converts photonic excitation into a charge separation. This is Cytochrome b559 subunit alpha from Oenothera berteroana (Bertero's evening primrose).